Reading from the N-terminus, the 741-residue chain is Nuclear poly(A) polymerase 4 (741 aa).

ATP-binding positions include 101-103 (FGS), 113-116 (ADID), 114-116 (DID), Asp-169, Lys-230, Tyr-239, and 248-249 (GV). Mg(2+)-binding residues include Asp-114, Asp-116, and Asp-169. The short motif at 485–492 (RRRQLPPF) is the Nuclear localization signal element. Disordered regions lie at residues 494–556 (FPNG…LSPQ) and 683–741 (YEGF…RLLT). A compositionally biased stretch (basic and acidic residues) spans 534 to 551 (KNDSEMMDVRPEKPEKRA). A compositionally biased stretch (polar residues) spans 701–717 (LYSQSGMSEDLQSNSLV). Residues 721–731 (EKSEDRARSES) show a composition bias toward basic and acidic residues. The span at 732–741 (FQKSQIRLLT) shows a compositional bias: polar residues.

The protein belongs to the poly(A) polymerase family. As to quaternary structure, monomer. Forms a complex with cleavage and polyadenylation specificity factor (CPSF) subunits CFIS2, FIPS3, PAPS1, PABN1, PABN2, PABN3 and FIPS5. It depends on Mg(2+) as a cofactor. The cofactor is Mn(2+). In terms of tissue distribution, mostly expressed in flowers (very active in pollen, sepals, styles, and stigmas), cotyledons and hypocotyls, and, to a lower extent, in roots (confined to the vascular tissue in the radicle) and leaves (in the vascular tissue and leaf petioles). Barely detected in stems. Active in the primary and secondary root systems.

The protein resides in the nucleus. The catalysed reaction is RNA(n) + ATP = RNA(n)-3'-adenine ribonucleotide + diphosphate. In terms of biological role, essential protein. Polymerase that creates the 3'-poly(A) tail of mRNA's. Also required for the endoribonucleolytic cleavage reaction at some polyadenylation sites. May acquire specificity through interaction with a cleavage and polyadenylation specificity factor (CPSF) at its C-terminus. The sequence is that of Nuclear poly(A) polymerase 4 from Arabidopsis thaliana (Mouse-ear cress).